The chain runs to 389 residues: Flap endonuclease 1 (389 aa).

Residues 1–105 are N-domain; the sequence is MGIKGLNKLL…GELAKRKERR (105 aa). Asp34 contacts Mg(2+). DNA is bound by residues Arg47 and Arg71. Asp87, Glu170, Glu172, Asp191, and Asp193 together coordinate Mg(2+). The segment at 134-265 is I-domain; it reads DVTRFEKRTV…QTALKLMKEH (132 aa). Glu170 contacts DNA. 2 residues coordinate DNA: Gly243 and Asp245. Asp245 contributes to the Mg(2+) binding site. An interaction with PCNA region spans residues 351–359; sequence PQARLDGFF. Residues 360–389 are disordered; that stretch reads KVMPKEGGEKRKADDKKTKGKKPATKKAKK. A compositionally biased stretch (basic and acidic residues) spans 362-376; it reads MPKEGGEKRKADDKK. Positions 377-389 are enriched in basic residues; it reads TKGKKPATKKAKK.

It belongs to the XPG/RAD2 endonuclease family. FEN1 subfamily. In terms of assembly, interacts with PCNA. Three molecules of FEN1 bind to one PCNA trimer with each molecule binding to one PCNA monomer. PCNA stimulates the nuclease activity without altering cleavage specificity. Requires Mg(2+) as cofactor. In terms of processing, phosphorylated. Phosphorylation upon DNA damage induces relocalization to the nuclear plasma.

Its subcellular location is the nucleus. It is found in the nucleolus. The protein localises to the nucleoplasm. It localises to the mitochondrion. Structure-specific nuclease with 5'-flap endonuclease and 5'-3' exonuclease activities involved in DNA replication and repair. During DNA replication, cleaves the 5'-overhanging flap structure that is generated by displacement synthesis when DNA polymerase encounters the 5'-end of a downstream Okazaki fragment. It enters the flap from the 5'-end and then tracks to cleave the flap base, leaving a nick for ligation. Also involved in the long patch base excision repair (LP-BER) pathway, by cleaving within the apurinic/apyrimidinic (AP) site-terminated flap. Acts as a genome stabilization factor that prevents flaps from equilibrating into structures that lead to duplications and deletions. Also possesses 5'-3' exonuclease activity on nicked or gapped double-stranded DNA, and exhibits RNase H activity. Also involved in replication and repair of rDNA and in repairing mitochondrial DNA. This Yarrowia lipolytica (strain CLIB 122 / E 150) (Yeast) protein is Flap endonuclease 1.